A 131-amino-acid polypeptide reads, in one-letter code: GATA zinc finger domain-containing protein 2 (131 aa).

Over residues 21–55 the composition is skewed to low complexity; it reads STATDATSADGAASETDAASATDTTSATDPTSATD. The disordered stretch occupies residues 21 to 85; sequence STATDATSAD…RGRPYISTPP (65 aa). Over residues 57-74 the composition is skewed to polar residues; that stretch reads IATTNTTGITSSGPTTNG. The GATA-type zinc-finger motif lies at 88–115; sequence CYDCGRTRSPYWRKGTYNGQVVHLCNAC.

This Dictyostelium discoideum (Social amoeba) protein is GATA zinc finger domain-containing protein 2 (comH).